A 361-amino-acid chain; its full sequence is 3-dehydroquinate synthase (361 aa).

Residues 70 to 75 (DGEQHK), 104 to 108 (GVVGD), 128 to 129 (TT), K141, and K150 contribute to the NAD(+) site. Residues E183, H246, and H263 each contribute to the Zn(2+) site.

It belongs to the sugar phosphate cyclases superfamily. Dehydroquinate synthase family. It depends on Co(2+) as a cofactor. Zn(2+) is required as a cofactor. Requires NAD(+) as cofactor.

It localises to the cytoplasm. It carries out the reaction 7-phospho-2-dehydro-3-deoxy-D-arabino-heptonate = 3-dehydroquinate + phosphate. The protein operates within metabolic intermediate biosynthesis; chorismate biosynthesis; chorismate from D-erythrose 4-phosphate and phosphoenolpyruvate: step 2/7. Its function is as follows. Catalyzes the conversion of 3-deoxy-D-arabino-heptulosonate 7-phosphate (DAHP) to dehydroquinate (DHQ). In Teredinibacter turnerae (strain ATCC 39867 / T7901), this protein is 3-dehydroquinate synthase.